The sequence spans 51 residues: DNA-binding protein (51 aa).

The segment at 1–51 is disordered; sequence MVYRRRRSRSADGTYTRRRRSSGYRRRPGRPRTYRRSRSATRRSGYRRRRY. 2 tandem repeats follow at residues 5 to 10 and 17 to 22. The tract at residues 5–22 is 2 X 6 AA repeats of R-R-R-R-S-S; sequence RRRSRSADGTYTRRRRSS. Basic residues predominate over residues 16–51; that stretch reads TRRRRSSGYRRRPGRPRTYRRSRSATRRSGYRRRRY.

Post-translationally, probably phosphorylated in infected cells.

Its subcellular location is the virion. Functionally, thought to be responsible for DNA condensation during packaging of the nucleocapsids. This chain is DNA-binding protein (P6.5), found in Orgyia pseudotsugata (Douglas-fir tussock moth).